Here is a 253-residue protein sequence, read N- to C-terminus: Imidazole glycerol phosphate synthase subunit HisF (253 aa).

Catalysis depends on residues aspartate 12 and aspartate 131.

This sequence belongs to the HisA/HisF family. As to quaternary structure, heterodimer of HisH and HisF.

It is found in the cytoplasm. It carries out the reaction 5-[(5-phospho-1-deoxy-D-ribulos-1-ylimino)methylamino]-1-(5-phospho-beta-D-ribosyl)imidazole-4-carboxamide + L-glutamine = D-erythro-1-(imidazol-4-yl)glycerol 3-phosphate + 5-amino-1-(5-phospho-beta-D-ribosyl)imidazole-4-carboxamide + L-glutamate + H(+). It participates in amino-acid biosynthesis; L-histidine biosynthesis; L-histidine from 5-phospho-alpha-D-ribose 1-diphosphate: step 5/9. Functionally, IGPS catalyzes the conversion of PRFAR and glutamine to IGP, AICAR and glutamate. The HisF subunit catalyzes the cyclization activity that produces IGP and AICAR from PRFAR using the ammonia provided by the HisH subunit. The polypeptide is Imidazole glycerol phosphate synthase subunit HisF (Corynebacterium urealyticum (strain ATCC 43042 / DSM 7109)).